The sequence spans 1051 residues: Transcription intermediary factor 1-alpha (1051 aa).

Residues 1-42 (MEVAVEKAAAAAAPAGGPAAAAPSGENEAESRQGPDSESGGE) are disordered. A Glycyl lysine isopeptide (Lys-Gly) (interchain with G-Cter in SUMO2) cross-link involves residue Lys7. Residues 8 to 23 (AAAAAAPAGGPAAAAP) are compositionally biased toward low complexity. The segment at 52 to 77 (CAVCHQNIQSRVPKLLPCLHSFCQRC) adopts an RING-type zinc-finger fold. Positions 94–115 (SAETPPPAPAPAPAPGSPAGGP) are disordered. A Phosphothreonine modification is found at Thr97. Residues 97–109 (TPPPAPAPAPAPG) are compositionally biased toward pro residues. Position 110 is a phosphoserine (Ser110). 2 B box-type zinc fingers span residues 158-211 (KSNQ…VSPE) and 218-259 (QRPV…YQFI). Zn(2+)-binding residues include Cys163, Cys166, Cys187, and His200. A Glycyl lysine isopeptide (Lys-Gly) (interchain with G-Cter in SUMO2) cross-link involves residue Lys205. Residues Cys223, His226, Cys246, and His251 each coordinate Zn(2+). Lys276 is covalently cross-linked (Glycyl lysine isopeptide (Lys-Gly) (interchain with G-Cter in SUMO2)). A coiled-coil region spans residues 289–359 (NQIQNRIIEI…AGLSKQLEHV (71 aa)). Residues 429–457 (ESQPQMPKQNPVVEQSSQPPGGLPSNQLS) form a disordered region. Positions 431–457 (QPQMPKQNPVVEQSSQPPGGLPSNQLS) are enriched in polar residues. Glycyl lysine isopeptide (Lys-Gly) (interchain with G-Cter in SUMO2) cross-links involve residues Lys436 and Lys458. Arg469 carries the post-translational modification Omega-N-methylarginine. 2 stretches are compositionally biased toward low complexity: residues 479 to 490 (AQRQQVQRRPAP) and 501 to 510 (PIQQPSISHQ). The tract at residues 479-551 (AQRQQVQRRP…PSQNVPRQTT (73 aa)) is disordered. Pro residues predominate over residues 526–535 (PNGPVLPPYP). Residues 538 to 551 (LRYSPSQNVPRQTT) are compositionally biased toward polar residues. Residues Lys553 and Lys642 each participate in a glycyl lysine isopeptide (Lys-Gly) (interchain with G-Cter in SUMO2) cross-link. Residues 644 to 713 (TGVDHAQPRP…PAGADSTHKV (70 aa)) form a disordered region. Ser655, Ser661, and Ser668 each carry phosphoserine. Residues 655-667 (SNRTVQSPNSSVP) show a composition bias toward polar residues. The segment covering 686 to 708 (SPSASSVGSRGSSGSSSKPAGAD) has biased composition (low complexity). Residues Lys703 and Lys712 each participate in a glycyl lysine isopeptide (Lys-Gly) (interchain with G-Cter in SUMO2) cross-link. Glycyl lysine isopeptide (Lys-Gly) (interchain with G-Cter in SUMO); alternate cross-links involve residues Lys724 and Lys742. Lys724 participates in a covalent cross-link: Glycyl lysine isopeptide (Lys-Gly) (interchain with G-Cter in SUMO1); alternate. Glycyl lysine isopeptide (Lys-Gly) (interchain with G-Cter in SUMO2); alternate cross-links involve residues Lys724 and Lys742. Phosphoserine is present on residues Ser745 and Ser769. The tract at residues 755 to 780 (NYPRSILTSLLLNSSQSSASEETVLR) is nuclear receptor binding site (NRBS). The tract at residues 771-827 (SSASEETVLRSDAPDSTGDQPGLHQENSSNGKSEWSDASQKSPVHVGETRKEDDPNE) is disordered. A compositionally biased stretch (polar residues) spans 795-812 (QENSSNGKSEWSDASQKS). Lys802 participates in a covalent cross-link: Glycyl lysine isopeptide (Lys-Gly) (interchain with G-Cter in SUMO2). A Phosphoserine modification is found at Ser809. Lys811 participates in a covalent cross-link: Glycyl lysine isopeptide (Lys-Gly) (interchain with G-Cter in SUMO2). A Phosphoserine modification is found at Ser812. Thr819 bears the Phosphothreonine mark. The PHD-type zinc-finger motif lies at 827-874 (EDWCAVCQNGGELLCCEKCPKVFHLTCHVPTLTNFPSGEWICTFCRDL). The segment at 835–841 (NGGELLC) is interaction with histone H3 that is not methylated at 'Lys-4' (H3K4me0). A Glycyl lysine isopeptide (Lys-Gly) (interchain with G-Cter in SUMO2) cross-link involves residue Lys876. Residues 892 to 908 (KRKSEGLTKLTPIDKRK) carry the Nuclear localization signal motif. The Bromo domain maps to 900 to 1005 (KLTPIDKRKC…SYFEELLKNL (106 aa)). Glycyl lysine isopeptide (Lys-Gly) (interchain with G-Cter in SUMO2) cross-links involve residues Lys950 and Lys993. The tract at residues 1024–1051 (KFSDDSDDDFVQPRKKRLKSTEDRQLLK) is disordered. A phosphoserine mark is found at Ser1026 and Ser1029. Lys1042 is covalently cross-linked (Glycyl lysine isopeptide (Lys-Gly) (interchain with G-Cter in SUMO2)). Over residues 1042-1051 (KSTEDRQLLK) the composition is skewed to basic and acidic residues. Ser1043 carries the phosphoserine modification.

Interacts (via bromo domain) with histone H3 (via N-terminus), provided that it is not methylated at 'Lys-4' (H3K4me0). Does not interact with histone H3 that is methylated at 'Lys-4' (H3K4me1, H3K4me2 or H3K4me3). Interacts (via bromo domain) with histone H3 (via N-terminus) that is acetylated at 'Lys-23' (H3K23ac). Has the highest affinity for histone H3 that is both unmodified at 'Lys-4' (H3K4me0) and acetylated at 'Lys-23' (H3K23ac). Has very low affinity for histone H3 that is methylated at 'Lys-9' (H3K9me), or acetylated at both 'Lys-9' (H3K9ac) and 'Lys-14' (H3K14ac), or acetylated at 'Lys-27' (H3K27ac) (in vitro). Interacts with TRIM16. Interacts with NR3C2/MCR. Interacts with the ligand-binding domain of estrogen receptors (in vitro). Interaction with DNA-bound estrogen receptors requires the presence of estradiol. Interacts with AR, CARM1, KAT5/TIP60, NCOA2/GRIP1, BRD7, CBX1, CBX3 and CBX5. Part of a coactivator complex containing TRIM24, NCOA2/GRIP1 and CARM1. Interacts with p53/TP53 and PML. Sumoylated. In terms of processing, phosphorylated at Ser-768 by ATM kinase induces ubiquitination and degradation during DNA damage. Post-translationally, undergoes ubiquitination-mediated degradation in response to DNA damage. In terms of tissue distribution, detected in embryonic and adult liver. Detected in zygote and throughout embryogenesis (at protein level). Detected in all adult tissues, with the highest expression level in testis.

The protein localises to the nucleus. The protein resides in the cytoplasm. The catalysed reaction is S-ubiquitinyl-[E2 ubiquitin-conjugating enzyme]-L-cysteine + [acceptor protein]-L-lysine = [E2 ubiquitin-conjugating enzyme]-L-cysteine + N(6)-ubiquitinyl-[acceptor protein]-L-lysine.. It functions in the pathway protein modification; protein ubiquitination. Functionally, transcriptional coactivator that interacts with numerous nuclear receptors and coactivators and modulates the transcription of target genes. Interacts with chromatin depending on histone H3 modifications, having the highest affinity for histone H3 that is both unmodified at 'Lys-4' (H3K4me0) and acetylated at 'Lys-23' (H3K23ac). Has E3 protein-ubiquitin ligase activity. Promotes ubiquitination and proteasomal degradation of p53/TP53. Plays a role in the regulation of cell proliferation and apoptosis via its effects on p53/TP53 levels. Up-regulates ligand-dependent transcription activation by AR, GCR/NR3C1, thyroid hormone receptor (TR) and ESR1. Modulates transcription activation by retinoic acid (RA) receptors, such as RARA. Plays a role in regulating retinoic acid-dependent proliferation of hepatocytes. Required for normal transition from proliferating neonatal hepatocytes to quiescent adult hepatocytes. In terms of biological role, transcriptional coactivator that interacts with numerous nuclear receptors and coactivators and modulates the transcription of target genes. Interacts with chromatin depending on histone H3 modifications, having the highest affinity for histone H3 that is both unmodified at 'Lys-4' (H3K4me0) and acetylated at 'Lys-23' (H3K23ac). Has E3 protein-ubiquitin ligase activity. During the DNA damage response, participates in an autoregulatory feedback loop with TP53. Early in response to DNA damage, ATM kinase phosphorylates TRIM24 leading to its ubiquitination and degradation. After sufficient DNA repair has occurred, TP53 activates TRIM24 transcription, ultimately leading to TRIM24-mediated TP53 ubiquitination and degradation. Plays a role in the regulation of cell proliferation and apoptosis, at least in part via its effects on p53/TP53 levels. Up-regulates ligand-dependent transcription activation by AR, GCR/NR3C1, thyroid hormone receptor (TR) and ESR1. Modulates transcription activation by retinoic acid (RA) receptors, including RARA. Plays a role in regulating retinoic acid-dependent proliferation of hepatocytes. Also participates in innate immunity by mediating the specific 'Lys-63'-linked ubiquitination of TRAF3 leading to activation of downstream signal transduction of the type I IFN pathway. Additionally, negatively regulates NLRP3/CASP1/IL-1beta-mediated pyroptosis and cell migration probably by ubiquitinating NLRP3. The chain is Transcription intermediary factor 1-alpha (Trim24) from Mus musculus (Mouse).